The chain runs to 585 residues: Arginine--tRNA ligase (585 aa).

The 'HIGH' region signature appears at 131–141 (ANPTGPMHVGH).

Belongs to the class-I aminoacyl-tRNA synthetase family. As to quaternary structure, monomer.

It is found in the cytoplasm. The enzyme catalyses tRNA(Arg) + L-arginine + ATP = L-arginyl-tRNA(Arg) + AMP + diphosphate. In Sinorhizobium medicae (strain WSM419) (Ensifer medicae), this protein is Arginine--tRNA ligase.